A 698-amino-acid chain; its full sequence is UvrABC system protein B (698 aa).

Residues 25-183 (NGLNSGLVHQ…TLIDLQFERN (159 aa)) form the Helicase ATP-binding domain. Position 38 to 45 (38 to 45 (GATGTGKT)) interacts with ATP. Residues 91 to 114 (YYDAYTPEAYVPSKDLYIEKEAQI) carry the Beta-hairpin motif. Residues 428–594 (QIDDLLGEIK…GIVKAVRDLT (167 aa)) form the Helicase C-terminal domain. The UVR domain occupies 622 to 657 (FKVINALEKQMKQAAKDLEFEKAALLRDQLTEMRQT).

It belongs to the UvrB family. In terms of assembly, forms a heterotetramer with UvrA during the search for lesions. Interacts with UvrC in an incision complex.

It is found in the cytoplasm. In terms of biological role, the UvrABC repair system catalyzes the recognition and processing of DNA lesions. A damage recognition complex composed of 2 UvrA and 2 UvrB subunits scans DNA for abnormalities. Upon binding of the UvrA(2)B(2) complex to a putative damaged site, the DNA wraps around one UvrB monomer. DNA wrap is dependent on ATP binding by UvrB and probably causes local melting of the DNA helix, facilitating insertion of UvrB beta-hairpin between the DNA strands. Then UvrB probes one DNA strand for the presence of a lesion. If a lesion is found the UvrA subunits dissociate and the UvrB-DNA preincision complex is formed. This complex is subsequently bound by UvrC and the second UvrB is released. If no lesion is found, the DNA wraps around the other UvrB subunit that will check the other stand for damage. This Herpetosiphon aurantiacus (strain ATCC 23779 / DSM 785 / 114-95) protein is UvrABC system protein B.